Here is a 135-residue protein sequence, read N- to C-terminus: Large ribosomal subunit protein uL22 (135 aa).

It belongs to the universal ribosomal protein uL22 family. Part of the 50S ribosomal subunit.

In terms of biological role, this protein binds specifically to 23S rRNA; its binding is stimulated by other ribosomal proteins, e.g. L4, L17, and L20. It is important during the early stages of 50S assembly. It makes multiple contacts with different domains of the 23S rRNA in the assembled 50S subunit and ribosome. Its function is as follows. The globular domain of the protein is located near the polypeptide exit tunnel on the outside of the subunit, while an extended beta-hairpin is found that lines the wall of the exit tunnel in the center of the 70S ribosome. The polypeptide is Large ribosomal subunit protein uL22 (Christiangramia forsetii (strain DSM 17595 / CGMCC 1.15422 / KT0803) (Gramella forsetii)).